Consider the following 375-residue polypeptide: Probable aspartate aminotransferase (375 aa).

Residues glycine 31 and asparagine 165 each coordinate L-aspartate. Residue lysine 223 is modified to N6-(pyridoxal phosphate)lysine. Residue arginine 353 coordinates L-aspartate.

This sequence belongs to the class-I pyridoxal-phosphate-dependent aminotransferase family. As to quaternary structure, homodimer. The cofactor is pyridoxal 5'-phosphate.

The protein resides in the cytoplasm. The enzyme catalyses L-aspartate + 2-oxoglutarate = oxaloacetate + L-glutamate. In Methanocaldococcus jannaschii (strain ATCC 43067 / DSM 2661 / JAL-1 / JCM 10045 / NBRC 100440) (Methanococcus jannaschii), this protein is Probable aspartate aminotransferase.